The primary structure comprises 1460 residues: MSIKLPLSNINSGGNSNNSSSSNSTSNNNININIGNGIPTNIEKMTFEDSETQKLNIKQQSNNNTSTSVCVSSIHSSSPISSPTSHQVNKSSGSLPPVIKRSPTTTHHHNSSGSNSSSSSSGSNNNNNQIKTSNGMNKPNPTGFLFGSKPRENSQNKIDDNKGVNLAVSTSNSSNNFHKSHSESNIININAPPVETVNMEEIYNNIPSSISMENIRENENNNNSSNNNSNNNNNNNNNNNNSNNINNVNGNKSSLASSTSSISSLSSVSTLSTSNAATNTNTNANTTSTTKTTSTVRSTSPTQFKPRVEFDENNPNAIILSRQRCKSISSPSDFRLNPPSNVHMPTSSLSTSTSTTNVNGLLLPNGVGGVSMSFTPSGLPMTPPTNSSQVDTLQMSTESITIQPSSLDSSSESVSDGLQSVSGSPVTASPSPTISNNTNATTTNNNNNTNTNNNNNNNNNQHNHHHHQHSHSQQHDVYQIKKENFPSSPTSPTLLPSETHDFSSEYSSNPGGKCAICRKPLWSFPISDKSRRCRDCSLVVHRACVPLATECPSAKKSPSKLSVPNGNQSNSSSSSSSSSSSSSSSNSSSSNTKGHSRTPSSPSVSSIPGFQLTSNASQNLHVNSHTLSLLVNGATIDSNHYKRNKKSLEAGARDFHFIFRGCGIPLDEFPLDSYVCGLYSYFAHGRLYLTESYVCFYDGFVFDRTKERTKIIKVSNIASIEKRSSGLNPSAIKIKTFDDQSFIFTHFMHREVAFDDLEGLLIHQESLHFAHSIVANNFPGMNEAIRGQTKRLLSRARLDGHYQIHSKIRCPMPSKEILLMSAIKNNNLDMVVTLLNYYCQVNSDEINSVDSKGYTPLHNAVFSECSDQIFMHLLNQKEVRVRERNMDGNTPLHYFCQKFKSPECQRIVQAMIEKGANINEQNYNGETPLHKAIFNHSVRLLMVYILLKNNANVNIVNNAGESPLHYAVRLGRLDVAKMLLAAGADPTIISLRDRKTALALAVDYDVCPEISDLLRRLDTITTSLEMYELEKFQASLVVEELQKENVVARLDEKLLDKIGCTDKEERRKFLSLKSNRLLIHHPARTQGAKIILKEMETMDIKNGKLIISETELEYTEKIGSGASGKVFKGIYRGRVVAIKVLKSADDEMTREDFLKEFGVLASLESHTIVGLYGVVLEPKICLVMEYCSNGSIYHSIRKNPPSWERFFSFVQQMLAGINALHQSTPQVLHRDIKTLNFLVNHNNKVKVADFGLSRFNTESNQETLNKTRGTSVYCAPEVFEGKEYNERSDMYSMGIVMWEIVYCVVYGCYMIPYQEYNKMFNAFQVALLVNSSKRVLRPTIPIGVPQVLKDLIYCLWDHDVSSRPTATEAMTALAVCEKEYKQNKAQWELVITKKEPTPLPRVAPLPAFPGYRQFYEQNLDIKPIPEEEQIYQEAMEKQRRNQEASANRNQKNKELLNNNN.

Disordered regions lie at residues 1-32 (MSIK…NINI), 57-181 (IKQQ…HKSH), 216-259 (RENE…ASST), 272-311 (STSN…VEFD), 329-354 (SSPS…TSTS), 374-510 (FTPS…SSNP), and 551-608 (CPSA…SSIP). Composition is skewed to low complexity over residues 8 to 32 (SNIN…NINI), 61 to 86 (SNNN…PTSH), and 111 to 128 (SSGS…NNNN). Over residues 129-140 (QIKTSNGMNKPN) the composition is skewed to polar residues. Basic and acidic residues predominate over residues 149–162 (KPRENSQNKIDDNK). 2 stretches are compositionally biased toward low complexity: residues 220-259 (NNNN…ASST) and 272-300 (STSN…RSTS). 2 stretches are compositionally biased toward polar residues: residues 329–345 (SSPS…VHMP) and 384–404 (PTNS…TIQP). A compositionally biased stretch (low complexity) spans 405 to 422 (SSLDSSSESVSDGLQSVS). The span at 423 to 434 (GSPVTASPSPTI) shows a compositional bias: polar residues. Residues 435-461 (SNNTNATTTNNNNNTNTNNNNNNNNNQ) show a composition bias toward low complexity. Residues 462–472 (HNHHHHQHSHS) show a composition bias toward basic residues. Positions 467 to 667 (HQHSHSQQHD…IFRGCGIPLD (201 aa)) are interaction with 14-3-3 protein. Residues 486-497 (PSSPTSPTLLPS) show a composition bias toward low complexity. Residues 499-551 (THDFSSEYSSNPGGKCAICRKPLWSFPISDKSRRCRDCSLVVHRACVPLATEC) form a Phorbol-ester/DAG-type zinc finger. A compositionally biased stretch (polar residues) spans 559 to 568 (SKLSVPNGNQ). Low complexity predominate over residues 569-608 (SNSSSSSSSSSSSSSSSNSSSSNTKGHSRTPSSPSVSSIP). One can recognise a GRAM domain in the interval 653–724 (RDFHFIFRGC…SNIASIEKRS (72 aa)). ANK repeat units follow at residues 814 to 843 (SKEI…QVNS), 852 to 883 (KGYT…RVRE), 887 to 920 (DGNT…NINE), 924 to 955 (NGET…NVNI), and 959 to 988 (AGES…DPTI). The Protein kinase domain occupies 1112-1375 (LEYTEKIGSG…ATEAMTALAV (264 aa)). Residues 1118–1126 (IGSGASGKV) and Lys1139 contribute to the ATP site. Asp1231 functions as the Proton acceptor in the catalytic mechanism. Residues 1293-1313 (MGIVMWEIVYCVVYGCYMIPY) form a helical membrane-spanning segment. The stretch at 1425–1460 (PEEEQIYQEAMEKQRRNQEASANRNQKNKELLNNNN) forms a coiled coil. The interval 1434-1460 (AMEKQRRNQEASANRNQKNKELLNNNN) is disordered.

Belongs to the protein kinase superfamily. TKL Ser/Thr protein kinase family.

Its subcellular location is the cytoplasm. The protein resides in the cytoskeleton. It localises to the membrane. The protein localises to the nucleus. It catalyses the reaction L-seryl-[protein] + ATP = O-phospho-L-seryl-[protein] + ADP + H(+). It carries out the reaction L-threonyl-[protein] + ATP = O-phospho-L-threonyl-[protein] + ADP + H(+). Involved in the development of the fruiting body. Overexpression phenocopies the spnA null phenotype. This Dictyostelium discoideum (Social amoeba) protein is Ankyrin repeat-containing protein kinase A (arkA).